Reading from the N-terminus, the 178-residue chain is MHPMIPAEYISNIIYEGPGADSLSAAAEQLRLMYNSANMTAKSLTDRLGELQENWKGSSSDLMADAAGRYLDWLTKHSRQILETAYVIDFLAYVYEETRHKVVPPATIANNREEVHRLIASNVAGVNTPAIAGLDAQYQQYRAQNIAVMNDYQSTARFILAYLPRWQEPPQIYGGGGG.

The protein belongs to the mycobacterial PPE family.

This is an uncharacterized protein from Mycobacterium tuberculosis (strain CDC 1551 / Oshkosh).